The chain runs to 33 residues: MKENKVQQISHKLINIVVFVAIVEYAYLFLHFY.

The Cytoplasmic segment spans residues 1–12; sequence MKENKVQQISHK. Residues 13–33 form a helical membrane-spanning segment; sequence LINIVVFVAIVEYAYLFLHFY.

It localises to the cell inner membrane. This is an uncharacterized protein from Escherichia coli (strain K12).